A 434-amino-acid chain; its full sequence is V-type ATP synthase beta chain (434 aa).

Belongs to the ATPase alpha/beta chains family.

Functionally, produces ATP from ADP in the presence of a proton gradient across the membrane. The V-type beta chain is a regulatory subunit. The polypeptide is V-type ATP synthase beta chain (Borreliella afzelii (strain PKo) (Borrelia afzelii)).